Reading from the N-terminus, the 104-residue chain is PTS system lactose-specific EIIA component (104 aa).

One can recognise a PTS EIIA type-3 domain in the interval 1-102; it reads MNRDEVQLLG…MKHLIELYKK (102 aa). Catalysis depends on His78, which acts as the Tele-phosphohistidine intermediate. A Phosphohistidine; by HPr modification is found at His78. Residue Asp81 participates in Mg(2+) binding.

As to quaternary structure, homotrimer. It depends on Mg(2+) as a cofactor.

Its subcellular location is the cytoplasm. In terms of biological role, the phosphoenolpyruvate-dependent sugar phosphotransferase system (sugar PTS), a major carbohydrate active transport system, catalyzes the phosphorylation of incoming sugar substrates concomitantly with their translocation across the cell membrane. The enzyme II LacEF PTS system is involved in lactose transport. This Staphylococcus epidermidis (strain ATCC 35984 / DSM 28319 / BCRC 17069 / CCUG 31568 / BM 3577 / RP62A) protein is PTS system lactose-specific EIIA component.